A 153-amino-acid chain; its full sequence is Superoxide dismutase [Cu-Zn] (153 aa).

Residues H45, H47, and H62 each coordinate Cu cation. A disulfide bridge links C56 with C145. The Zn(2+) site is built by H62, H70, H79, and D82. H119 contacts Cu cation.

Belongs to the Cu-Zn superoxide dismutase family. In terms of assembly, homodimer. It depends on Cu cation as a cofactor. The cofactor is Zn(2+).

The protein resides in the cytoplasm. It catalyses the reaction 2 superoxide + 2 H(+) = H2O2 + O2. Destroys radicals which are normally produced within the cells and which are toxic to biological systems. This chain is Superoxide dismutase [Cu-Zn], found in Drosophila orena (Fruit fly).